Consider the following 296-residue polypeptide: Cytidine deaminase (296 aa).

CMP/dCMP-type deaminase domains follow at residues 47–167 (TEAE…FGPK) and 186–296 (DSSD…VDPV). 88 to 90 (NLE) is a binding site for substrate. His-101 is a binding site for Zn(2+). Glu-103 serves as the catalytic Proton donor. Zn(2+) contacts are provided by Cys-128 and Cys-131.

It belongs to the cytidine and deoxycytidylate deaminase family. As to quaternary structure, homodimer. Zn(2+) is required as a cofactor.

It catalyses the reaction cytidine + H2O + H(+) = uridine + NH4(+). It carries out the reaction 2'-deoxycytidine + H2O + H(+) = 2'-deoxyuridine + NH4(+). Functionally, this enzyme scavenges exogenous and endogenous cytidine and 2'-deoxycytidine for UMP synthesis. The protein is Cytidine deaminase of Shewanella sp. (strain MR-4).